The chain runs to 167 residues: Small ribosomal subunit protein uS5 (167 aa).

Residues Leu12–Ile75 form the S5 DRBM domain.

The protein belongs to the universal ribosomal protein uS5 family. In terms of assembly, part of the 30S ribosomal subunit. Contacts proteins S4 and S8.

Functionally, with S4 and S12 plays an important role in translational accuracy. In terms of biological role, located at the back of the 30S subunit body where it stabilizes the conformation of the head with respect to the body. The chain is Small ribosomal subunit protein uS5 from Buchnera aphidicola subsp. Schizaphis graminum (strain Sg).